Reading from the N-terminus, the 378-residue chain is Beta sliding clamp (378 aa).

This sequence belongs to the beta sliding clamp family. Forms a ring-shaped head-to-tail homodimer around DNA which binds and tethers DNA polymerases and other proteins to the DNA. The DNA replisome complex has a single clamp-loading complex (3 tau and 1 each of delta, delta', psi and chi subunits) which binds 3 Pol III cores (1 core on the leading strand and 2 on the lagging strand) each with a beta sliding clamp dimer. Additional proteins in the replisome are other copies of gamma, psi and chi, Ssb, DNA helicase and RNA primase. Interacts with YabA, and via YabA, with DnaA. During sporulation probably interacts with SirA.

The protein resides in the cytoplasm. Its subcellular location is the nucleoid. In terms of biological role, confers DNA tethering and processivity to DNA polymerases and other proteins. Acts as a clamp, forming a ring around DNA (a reaction catalyzed by the clamp-loading complex) which diffuses in an ATP-independent manner freely and bidirectionally along dsDNA. Initially characterized for its ability to contact the catalytic subunit of DNA polymerase III (Pol III), a complex, multichain enzyme responsible for most of the replicative synthesis in bacteria; Pol III exhibits 3'-5' exonuclease proofreading activity. The beta chain is required for initiation of replication as well as for processivity of DNA replication. Overexpression in vivo stimulates inititation of DNA replication from oriC. Increased levels of DnaN remove YabA from its association with DnaA on the chromosome, allowing DnaA to bind to its targets. Its interaction with DnaA probably serves as a sink to prevent excessive replication initiation. The protein is Beta sliding clamp of Bacillus subtilis (strain 168).